A 340-amino-acid polypeptide reads, in one-letter code: Glycerol-3-phosphate dehydrogenase [NAD(P)+] (340 aa).

NADPH is bound by residues serine 14, phenylalanine 15, arginine 35, and lysine 109. Residues lysine 109 and glycine 137 each coordinate sn-glycerol 3-phosphate. Alanine 141 serves as a coordination point for NADPH. Sn-glycerol 3-phosphate is bound by residues lysine 192, aspartate 245, serine 255, arginine 256, and asparagine 257. Lysine 192 (proton acceptor) is an active-site residue. Arginine 256 contributes to the NADPH binding site. 2 residues coordinate NADPH: valine 280 and glutamate 282.

Belongs to the NAD-dependent glycerol-3-phosphate dehydrogenase family.

The protein resides in the cytoplasm. It catalyses the reaction sn-glycerol 3-phosphate + NAD(+) = dihydroxyacetone phosphate + NADH + H(+). The enzyme catalyses sn-glycerol 3-phosphate + NADP(+) = dihydroxyacetone phosphate + NADPH + H(+). It participates in membrane lipid metabolism; glycerophospholipid metabolism. Its function is as follows. Catalyzes the reduction of the glycolytic intermediate dihydroxyacetone phosphate (DHAP) to sn-glycerol 3-phosphate (G3P), the key precursor for phospholipid synthesis. The polypeptide is Glycerol-3-phosphate dehydrogenase [NAD(P)+] (Teredinibacter turnerae (strain ATCC 39867 / T7901)).